Consider the following 543-residue polypeptide: MASGGGGGNTGAGGGPGMGLSLGLGLGLSLGMSEATSEAEEEAATAEAVGRLATTLWLRLRGWEAVLAAAQRLLVWEKPLHSLVTAAALNGLFWLLSSSSLRPFFLLSVSLLAYFLLDLWQPRFLPDVSASSPEEPHSDSEGAGSGARPHLLSVPELCRYLAESWLTFQIHLQELLQYKRQNPAQFCVRVCSGCAVLAVLGHYVPGIMISYIVLLSILLWPLVVYHELIQRMYTRLEPLLMQLDYSMKAEANALHHKHDKRKRQGKNAPPGGDEPLAETESESEAELAGFSPVVDVKKTALALAITDSELSDEEASILESGGFSVSRATTPQLTDVSEDLDQQSLPSEPEETLSRDLGEGEEGELAPPEDLLGRPQALSRQALDSEEEEEDVAAKETLLRLSSPLHFVNTHFNGAGSPPDGVKCSPGGPVETLSPETVSGGLTALPGTLSPPLCLVGSDPAPSPSILPPVPQDSPQPLPAPEEEEALTTEDFELLDQGELEQLNAELGLEPETPPKPPDAPPLGPDIHSLVQSDQEAQAVAEP.

3 helical membrane-spanning segments follow: residues 12–32 (AGGGPGMGLSLGLGLGLSLGM), 100–120 (SLRPFFLLSVSLLAYFLLDLW), and 204–224 (VPGIMISYIVLLSILLWPLVV). Positions 254–265 (LHHKHDKRKRQG) are enriched in basic residues. Residues 254-287 (LHHKHDKRKRQGKNAPPGGDEPLAETESESEAEL) form a disordered region. Positions 275 to 285 (PLAETESESEA) are enriched in acidic residues. Phosphothreonine is present on threonine 279. Phosphoserine is present on residues serine 281, serine 283, serine 291, and serine 311. The residue at position 334 (threonine 334) is a Phosphothreonine. Disordered regions lie at residues 336 to 394 (VSED…DVAA) and 411 to 486 (HFNG…EEEA). Phosphoserine occurs at positions 337, 344, 347, and 385. The segment covering 461 to 480 (APSPSILPPVPQDSPQPLPA) has biased composition (pro residues). Positions 490 to 495 (EDFELL) match the LIR motif motif. The segment at 504–543 (NAELGLEPETPPKPPDAPPLGPDIHSLVQSDQEAQAVAEP) is disordered. Positions 512–524 (ETPPKPPDAPPLG) are enriched in pro residues.

Belongs to the RETREG family. In terms of assembly, interacts with ATG8 family modifier proteins MAP1LC3A, MAP1LC3B, MAP1LC3C, GABARAP, GABARAPL1 and GABARAPL2. Shows higher affinity for GABARAPL1 than for MAP1LC3B. Interacts with CANX.

The protein localises to the endoplasmic reticulum membrane. In terms of biological role, endoplasmic reticulum (ER)-anchored autophagy regulator which exists in an inactive state under basal conditions but is activated following cellular stress. When activated, induces ER fragmentation and mediates ER delivery into lysosomes through sequestration into autophagosomes via interaction with ATG8 family proteins. Required for collagen quality control in a LIR motif-independent manner. In Homo sapiens (Human), this protein is Reticulophagy regulator 2.